The following is a 367-amino-acid chain: tRNA pseudouridine synthase D (367 aa).

Asp-80 (nucleophile) is an active-site residue. Residues 156 to 316 form the TRUD domain; it reads GIPNWFGEQR…LKQERRALRL (161 aa).

It belongs to the pseudouridine synthase TruD family.

It catalyses the reaction uridine(13) in tRNA = pseudouridine(13) in tRNA. Functionally, responsible for synthesis of pseudouridine from uracil-13 in transfer RNAs. The protein is tRNA pseudouridine synthase D of Xanthomonas campestris pv. campestris (strain B100).